The primary structure comprises 92 residues: Acylphosphatase (92 aa).

Residues 5–92 form the Acylphosphatase-like domain; that stretch reads ATAAYVYGVV…TDYKGFTIRY (88 aa). Residues Arg-20 and Asn-38 contribute to the active site.

Belongs to the acylphosphatase family.

It catalyses the reaction an acyl phosphate + H2O = a carboxylate + phosphate + H(+). This Pectobacterium atrosepticum (strain SCRI 1043 / ATCC BAA-672) (Erwinia carotovora subsp. atroseptica) protein is Acylphosphatase (acyP).